Consider the following 348-residue polypeptide: 4-hydroxy-3-methylbut-2-en-1-yl diphosphate synthase (flavodoxin) (348 aa).

4 residues coordinate [4Fe-4S] cluster: cysteine 263, cysteine 266, cysteine 298, and glutamate 305.

This sequence belongs to the IspG family. [4Fe-4S] cluster is required as a cofactor.

The enzyme catalyses (2E)-4-hydroxy-3-methylbut-2-enyl diphosphate + oxidized [flavodoxin] + H2O + 2 H(+) = 2-C-methyl-D-erythritol 2,4-cyclic diphosphate + reduced [flavodoxin]. It functions in the pathway isoprenoid biosynthesis; isopentenyl diphosphate biosynthesis via DXP pathway; isopentenyl diphosphate from 1-deoxy-D-xylulose 5-phosphate: step 5/6. Its function is as follows. Converts 2C-methyl-D-erythritol 2,4-cyclodiphosphate (ME-2,4cPP) into 1-hydroxy-2-methyl-2-(E)-butenyl 4-diphosphate. In Dehalococcoides mccartyi (strain ATCC BAA-2100 / JCM 16839 / KCTC 5957 / BAV1), this protein is 4-hydroxy-3-methylbut-2-en-1-yl diphosphate synthase (flavodoxin).